A 226-amino-acid polypeptide reads, in one-letter code: Putative type II restriction enzyme MjaVIP (226 aa).

It belongs to the BsaWI type II restriction endonuclease family.

The enzyme catalyses Endonucleolytic cleavage of DNA to give specific double-stranded fragments with terminal 5'-phosphates.. Its function is as follows. A P subtype restriction enzyme that recognizes the double-stranded sequence 5'-CCGG-3'; the cleavage site is unknown. In Methanocaldococcus jannaschii (strain ATCC 43067 / DSM 2661 / JAL-1 / JCM 10045 / NBRC 100440) (Methanococcus jannaschii), this protein is Putative type II restriction enzyme MjaVIP (mjaVIRP).